The primary structure comprises 168 residues: MFLMWALRLVYVLVSNGYFVKQLFARASIIGVALLLSACATVPMASVEESNTAKQFRSPEKGNSGLYIYRDSFIGKALKKDLYIDDKFIGESAPDVFFYKTIKAGEHKISTESEFSNSDLNIKTESGKNYFIRQYTKFGVFVGGANLEQVSEEEGKKAISKLNMAVSH.

Residues 23–47 (LFARASIIGVALLLSACATVPMASV) form a helical membrane-spanning segment.

It localises to the membrane. This is an uncharacterized protein from Haemophilus influenzae (strain ATCC 51907 / DSM 11121 / KW20 / Rd).